The primary structure comprises 129 residues: Large ribosomal subunit protein uL22 (129 aa).

It belongs to the universal ribosomal protein uL22 family. As to quaternary structure, part of the 50S ribosomal subunit.

In terms of biological role, this protein binds specifically to 23S rRNA; its binding is stimulated by other ribosomal proteins, e.g. L4, L17, and L20. It is important during the early stages of 50S assembly. It makes multiple contacts with different domains of the 23S rRNA in the assembled 50S subunit and ribosome. Its function is as follows. The globular domain of the protein is located near the polypeptide exit tunnel on the outside of the subunit, while an extended beta-hairpin is found that lines the wall of the exit tunnel in the center of the 70S ribosome. This Sinorhizobium medicae (strain WSM419) (Ensifer medicae) protein is Large ribosomal subunit protein uL22.